We begin with the raw amino-acid sequence, 593 residues long: MEPATAPRPDMAPELTPEEEQATKQFLEEINKWTVQYNVSPLSWNVAVKFLMARKFDVLRAVELFHCYRETRRKEGIVKLKPHEEPLRSEILSGKFTILNVRDPTGASIALFTARLHHPHKSVQHVVLQALFYLLDRAVDSFETQRNGLVFIYDMCGSNYANFELDLGKKVLNLLKGAFPARLKKVLIVGAPIWFRVPYSIISLLLKDKVRERIQILKTSEVTQHLPRECLPENLGGYIKIDLATWNFQFLPQVNGHPDPFDEIILFSLPPALDWDSVHVPGPHAMTIQELVDYVNTRQKQGIYEEYEDIRRENPVGTFHCSMSPGNLEKNRYGDVPCLDQTRVKLTKRSGHTQTDYINASFMDGYKQKNAYIGTQGPLENTYRDFWLMVWEQKVLVIVMTTRFEEGGRRKCGQYWPLEKDSRIQFGFLTVTNLGVENMNHYKKTTLEIHNTEERQKRQVTHFQFLSWPDYGVPSSAASLIDFLRVVRSQQSMAVGSLGARSKGQCPEPPIVVHCSAGIGRTGTFCSLDICLAQLEELGTLNVFQTVSRMRTQRAFSIQTPEQYYFCYKAILEFAEREGMVPSGHSLLAMDGQ.

The residue at position 1 (M1) is an N-acetylmethionine. A disordered region spans residues 1 to 21; the sequence is MEPATAPRPDMAPELTPEEEQ. A CRAL-TRIO domain is found at 84–243; that stretch reads EEPLRSEILS…NLGGYIKIDL (160 aa). Positions 303–574 constitute a Tyrosine-protein phosphatase domain; it reads IYEEYEDIRR…YFCYKAILEF (272 aa). Substrate contacts are provided by residues D470, 515–521, and Q559; that span reads CSAGIGR. The Phosphocysteine intermediate role is filled by C515.

The protein belongs to the protein-tyrosine phosphatase family. Non-receptor class 3 subfamily.

The protein localises to the cytoplasm. It catalyses the reaction O-phospho-L-tyrosyl-[protein] + H2O = L-tyrosyl-[protein] + phosphate. In terms of biological role, protein-tyrosine phosphatase that could participate in the transfer of hydrophobic ligands or in functions of the Golgi apparatus. The chain is Tyrosine-protein phosphatase non-receptor type 9 (Ptpn9) from Rattus norvegicus (Rat).